Consider the following 228-residue polypeptide: Protein TIFY 10a (228 aa).

One can recognise a Tify domain in the interval 75–110 (REQEKRQLTIFYGGKVLVFDDFPAEKAKDLMQMASK). The Jas motif lies at 164–189 (PQARKASLHRFLEKRKDRLQAKAPYQ). Residues 166-173 (ARKASLHR) carry the Nuclear localization signal motif. Residues 175–228 (LEKRKDRLQAKAPYQGSPSDASPVKKELQESQPWLGLGPQVAAPDLSLRQESSQ) are disordered.

It belongs to the TIFY/JAZ family. As to quaternary structure, interacts with COI1A and COI1B in a coronatine-dependent manner. Coronatine is an analog of jasmonoyl isoleucine (JA-Ile). Post-translationally, ubiquitinated. Targeted for degradation by the SCF(COI1) E3 ubiquitin ligase-proteasome pathway during jasmonate signaling.

It localises to the nucleus. Functionally, repressor of jasmonate responses. The chain is Protein TIFY 10a from Oryza sativa subsp. japonica (Rice).